The primary structure comprises 205 residues: Anaerobic dimethyl sulfoxide reductase chain B (205 aa).

3 4Fe-4S ferredoxin-type domains span residues 4 to 32 (YGFY…LGTE), 57 to 89 (NIFA…KNAD), and 90 to 119 (GFVI…YDAQ). [4Fe-4S] cluster is bound by residues Cys13, Cys16, Cys19, Cys23, Cys67, Cys70, Cys75, Cys79, Cys99, Cys102, Cys105, Cys109, Cys126, Cys129, Cys141, and Cys145.

As to quaternary structure, heterotrimeric enzyme composed of a catalytic heterodimer (DmsAB) and a membrane anchor protein (DmsC). It depends on [4Fe-4S] cluster as a cofactor.

Functionally, electron transfer subunit of the terminal reductase during anaerobic growth on various sulfoxide and N-oxide compounds. The sequence is that of Anaerobic dimethyl sulfoxide reductase chain B (dmsB) from Haemophilus influenzae (strain ATCC 51907 / DSM 11121 / KW20 / Rd).